We begin with the raw amino-acid sequence, 146 residues long: Large ribosomal subunit protein uL15 (146 aa).

Residues 1–57 (MDLSNLKAAEGSVHSDNFRRGRGHGSGNGKTAGKGHKGQKARSGAPRPGFEGGQMPL) are disordered.

It belongs to the universal ribosomal protein uL15 family. Part of the 50S ribosomal subunit.

In terms of biological role, binds to the 23S rRNA. This chain is Large ribosomal subunit protein uL15, found in Agathobacter rectalis (strain ATCC 33656 / DSM 3377 / JCM 17463 / KCTC 5835 / VPI 0990) (Eubacterium rectale).